The following is a 293-amino-acid chain: Phosphatidylglycerol--prolipoprotein diacylglyceryl transferase (293 aa).

4 helical membrane passes run 4-24, 45-65, 81-101, and 115-135; these read ILAF…LFIF, FELR…YFVA, ELIF…YVLF, and IWEG…TGFL. Residue R165 participates in a 1,2-diacyl-sn-glycero-3-phospho-(1'-sn-glycerol) binding. 3 consecutive transmembrane segments (helical) span residues 204–224, 231–249, and 262–282; these read PTFL…SVYF, HGEV…RIVI, and IKAA…GFLI.

It belongs to the Lgt family.

Its subcellular location is the cell inner membrane. It carries out the reaction L-cysteinyl-[prolipoprotein] + a 1,2-diacyl-sn-glycero-3-phospho-(1'-sn-glycerol) = an S-1,2-diacyl-sn-glyceryl-L-cysteinyl-[prolipoprotein] + sn-glycerol 1-phosphate + H(+). It participates in protein modification; lipoprotein biosynthesis (diacylglyceryl transfer). Its function is as follows. Catalyzes the transfer of the diacylglyceryl group from phosphatidylglycerol to the sulfhydryl group of the N-terminal cysteine of a prolipoprotein, the first step in the formation of mature lipoproteins. This Thermotoga petrophila (strain ATCC BAA-488 / DSM 13995 / JCM 10881 / RKU-1) protein is Phosphatidylglycerol--prolipoprotein diacylglyceryl transferase.